The chain runs to 478 residues: Probable glucan endo-1,3-beta-glucosidase A6 (478 aa).

The N-terminal stretch at 1–20 (MSLLAFFLFTILVFSSSCCS) is a signal peptide. The active-site Proton donor is glutamate 135. Glutamate 280 acts as the Nucleophile in catalysis. A disulfide bond links cysteine 390 and cysteine 453.

The protein belongs to the glycosyl hydrolase 17 family. Contains two additional disulfide bonds, but it is unclear if they are between the pairs Cys-409-Cys-416 and Cys-425-Cys-471 or between the pairs Cys-409-Cys-471 and Cys-416-Cys-425. In terms of tissue distribution, anthers.

The enzyme catalyses Hydrolysis of (1-&gt;3)-beta-D-glucosidic linkages in (1-&gt;3)-beta-D-glucans.. In terms of biological role, probable beta-1,3-glucanase that may be involved in the degradation of callose walls around the microspore tetrad during pollen development. May be required for pollen exine formation. This Arabidopsis thaliana (Mouse-ear cress) protein is Probable glucan endo-1,3-beta-glucosidase A6.